A 376-amino-acid chain; its full sequence is Thymidine kinase (376 aa).

The interval 1–47 (MASHAGQQHAPAFGQAARASGPTDGRAASRPSHRQGASEARGDPELP) is disordered. 56–63 (GPHGVGKT) serves as a coordination point for ATP. Glu84 acts as the Proton acceptor in catalysis. Substrate contacts are provided by Tyr102 and Gln126. Arg217 is an ATP binding site. Arg223 serves as a coordination point for substrate.

This sequence belongs to the herpesviridae thymidine kinase family. In terms of assembly, homodimer.

The enzyme catalyses thymidine + ATP = dTMP + ADP + H(+). Functionally, catalyzes the transfer of the gamma-phospho group of ATP to thymidine to generate dTMP in the salvage pathway of pyrimidine synthesis. The dTMP serves as a substrate for DNA polymerase during viral DNA replication. Allows the virus to be reactivated and to grow in non-proliferative cells lacking a high concentration of phosphorylated nucleic acid precursors. This is Thymidine kinase from Human herpesvirus 2 (strain 333) (HHV-2).